Consider the following 194-residue polypeptide: Rho-related protein racC (194 aa).

GTP is bound by residues alanine 17, glycine 19, lysine 20, threonine 21, cysteine 22, glutamate 34, tyrosine 36, threonine 39, glycine 64, lysine 120, aspartate 122, alanine 163, and lysine 164. A Mg(2+)-binding site is contributed by threonine 21. Short sequence motifs (switch) lie at residues 30–41 and 61–79; these read RKFPEDYIPTVF and DTAG…YSSA. Threonine 39 serves as a coordination point for Mg(2+). At cysteine 191 the chain carries Cysteine methyl ester. Cysteine 191 carries S-geranylgeranyl cysteine lipidation. The propeptide at 192 to 194 is removed in mature form; the sequence is ALL.

This sequence belongs to the small GTPase superfamily. Rho family. Interacts (GTP-bound form) with PAK4 (via CRIB domain). Interacts (GTP-bound form) with PAK5 (via CRIB domain). It depends on Mg(2+) as a cofactor.

It is found in the cell membrane. It localises to the cytoplasm. Its subcellular location is the cytoskeleton. The catalysed reaction is GTP + H2O = GDP + phosphate + H(+). Regulated by guanine nucleotide exchange factors (GEFs) which promote the exchange of bound GDP for free GTP, GTPase activating proteins (GAPs) which increase the GTP hydrolysis activity, and GDP dissociation inhibitors which inhibit the dissociation of the nucleotide from the GTPase. Small GTPase which cycles between active GTP-bound and inactive GDP-bound states. This Entamoeba histolytica (strain ATCC 30459 / HM-1:IMSS / ABRM) protein is Rho-related protein racC.